A 401-amino-acid chain; its full sequence is Thermophilic serine proteinase (401 aa).

An N-terminal signal peptide occupies residues 1-24 (MKFKAIVSLSLAVSMSLFPFLVEA). A propeptide spanning residues 25-121 (ASNDGVESPK…AEPNYLFNAA (97 aa)) is cleaved from the precursor. Asp126 is a Ca(2+) binding site. Residues 133–399 (QYGPQNTYTD…YGRINSYNAV (267 aa)) enclose the Peptidase S8 domain. Asp160 functions as the Charge relay system in the catalytic mechanism. Residues Pro168, Asp169, Asp171, Asp179, Asp184, and Asp186 each contribute to the Ca(2+) site. Residue His193 is the Charge relay system of the active site. Ca(2+) is bound by residues Glu204, Asn207, Thr209, and Ile211. Cysteines 258 and 260 form a disulfide. Tyr297, Val300, and Asp323 together coordinate Na(+). Ser347 (charge relay system) is an active-site residue.

It belongs to the peptidase S8 family. Ca(2+) serves as cofactor. It depends on Na(+) as a cofactor.

The protein resides in the secreted. The sequence is that of Thermophilic serine proteinase from Bacillus sp. (strain AK1).